A 120-amino-acid polypeptide reads, in one-letter code: Chaperonin GroEL (120 aa).

ATP is bound at residue 23 to 27; the sequence is DGTTT.

The protein belongs to the chaperonin (HSP60) family. In terms of assembly, forms a cylinder of 14 subunits composed of two heptameric rings stacked back-to-back. Interacts with the co-chaperonin GroES.

It is found in the cytoplasm. It catalyses the reaction ATP + H2O + a folded polypeptide = ADP + phosphate + an unfolded polypeptide.. In terms of biological role, together with its co-chaperonin GroES, plays an essential role in assisting protein folding. The GroEL-GroES system forms a nano-cage that allows encapsulation of the non-native substrate proteins and provides a physical environment optimized to promote and accelerate protein folding. This Mycolicibacterium rhodesiae (Mycobacterium rhodesiae) protein is Chaperonin GroEL.